The following is a 387-amino-acid chain: TPR repeat-containing protein SYNPCC7002_A0425 (387 aa).

9 TPR repeats span residues 63–96 (LNAL…EANN), 97–130 (ARIH…EDDN), 132–164 (EFFN…QPNN), 166–198 (AYSL…DSNN), 200–232 (MALQ…RPND), 233–266 (AELR…STRD), 267–300 (SAMQ…DPQS), 302–334 (EAFA…SPTD), and 336–368 (AAFY…YQQR).

The chain is TPR repeat-containing protein SYNPCC7002_A0425 from Picosynechococcus sp. (strain ATCC 27264 / PCC 7002 / PR-6) (Agmenellum quadruplicatum).